A 60-amino-acid polypeptide reads, in one-letter code: Large ribosomal subunit protein bL33 (60 aa).

It belongs to the bacterial ribosomal protein bL33 family.

The sequence is that of Large ribosomal subunit protein bL33 from Cytophaga hutchinsonii (strain ATCC 33406 / DSM 1761 / CIP 103989 / NBRC 15051 / NCIMB 9469 / D465).